The sequence spans 83 residues: UPF0729 protein CBG02799 (83 aa).

The tract at residues 51–83 (QEKKEEEEEKEKSCCSTEAENTTEVTTETKKDQ) is disordered. Positions 67 to 76 (TEAENTTEVT) are enriched in low complexity.

It belongs to the UPF0729 family.

This chain is UPF0729 protein CBG02799, found in Caenorhabditis briggsae.